A 359-amino-acid chain; its full sequence is Stearoyl-CoA desaturase (359 aa).

At 1–72 (MPAHLLQDDI…EGPSPKVEYV (72 aa)) the chain is on the cytoplasmic side. Residues 73-93 (WRNIILMSLLHLGALYGITLI) form a helical membrane-spanning segment. Asn75 contacts substrate. Residues 94–97 (PTCK) lie on the Lumenal side of the membrane. The chain crosses the membrane as a helical span at residues 98–118 (FYTWLWGVFYYFVSALGITAG). Residues 119–217 (AHRLWSHRSY…EKLVMFQRRY (99 aa)) are Cytoplasmic-facing. 2 residues coordinate Fe cation: His120 and His125. A Histidine box-1 motif is present at residues 120-125 (HRLWSH). 3 residues coordinate substrate: Asn148, Arg155, and Asp156. Fe cation contacts are provided by His157, His160, and His161. The Histidine box-2 signature appears at 157 to 161 (HRAHH). Positions 188 and 189 each coordinate substrate. Ser198 and Ser203 each carry phosphoserine. The chain crosses the membrane as a helical span at residues 218-237 (YKPGLLMMCFILPTLVPWYF). Over 238-241 (WGET) the chain is Lumenal. Residues 242 to 263 (FQNSVFVATFLRYAVVLNATWL) form a helical membrane-spanning segment. A substrate-binding site is contributed by Trp262. The Cytoplasmic segment spans residues 264–359 (VNSAAHLFGY…RTGDGNYKSG (96 aa)). Fe cation-binding residues include His269, His298, His301, and His302. The Histidine box-3 signature appears at 298-302 (HNYHH).

It belongs to the fatty acid desaturase type 1 family. May self-associate and form homodimers. Fe(2+) is required as a cofactor. In terms of tissue distribution, detected in fetal liver, lung and brain. Highly expressed in adult adipose tissue, and at lower levels in adult brain and lung.

The protein resides in the endoplasmic reticulum membrane. It carries out the reaction octadecanoyl-CoA + 2 Fe(II)-[cytochrome b5] + O2 + 2 H(+) = (9Z)-octadecenoyl-CoA + 2 Fe(III)-[cytochrome b5] + 2 H2O. It catalyses the reaction hexadecanoyl-CoA + 2 Fe(II)-[cytochrome b5] + O2 + 2 H(+) = (9Z)-hexadecenoyl-CoA + 2 Fe(III)-[cytochrome b5] + 2 H2O. Its function is as follows. Stearoyl-CoA desaturase that utilizes O(2) and electrons from reduced cytochrome b5 to introduce the first double bond into saturated fatty acyl-CoA substrates. Catalyzes the insertion of a cis double bond at the delta-9 position into fatty acyl-CoA substrates including palmitoyl-CoA and stearoyl-CoA. Gives rise to a mixture of 16:1 and 18:1 unsaturated fatty acids. Plays an important role in lipid biosynthesis. Plays an important role in regulating the expression of genes that are involved in lipogenesis and in regulating mitochondrial fatty acid oxidation. Plays an important role in body energy homeostasis. Contributes to the biosynthesis of membrane phospholipids, cholesterol esters and triglycerides. The chain is Stearoyl-CoA desaturase (SCD) from Homo sapiens (Human).